The following is a 331-amino-acid chain: Cytoplasmic envelopment protein 1 (331 aa).

Belongs to the herpesviridae cytoplasmic envelopment protein 1 family. As to quaternary structure, interacts with protein ORF7; this interaction localizes protein ORF53 to the host trans-Golgi network (TGN).

The protein localises to the virion. It is found in the virion tegument. The protein resides in the host cytoplasm. Its subcellular location is the host Golgi apparatus. Its function is as follows. Plays a critical role in cytoplasmic virus egress. Participates in the final step of tegumentation and envelope acquisition within the host cytoplasm. The chain is Cytoplasmic envelopment protein 1 (ORF53) from Varicella-zoster virus (strain Dumas) (HHV-3).